Reading from the N-terminus, the 171-residue chain is Large ribosomal subunit protein bL21 (171 aa).

A disordered region spans residues A144–A171. Over residues K154–A163 the composition is skewed to basic residues.

Belongs to the bacterial ribosomal protein bL21 family. As to quaternary structure, part of the 50S ribosomal subunit. Contacts protein L20.

Its function is as follows. This protein binds to 23S rRNA in the presence of protein L20. This is Large ribosomal subunit protein bL21 from Caulobacter vibrioides (strain ATCC 19089 / CIP 103742 / CB 15) (Caulobacter crescentus).